The chain runs to 376 residues: Respiration factor 1 (376 aa).

Disordered stretches follow at residues 1-23 (MKDLNPEMGKFATTKGPPQDNRG), 88-107 (VNVTHDESLPLGTIESNSTK), 258-279 (FKEKKKKKKGDVNGNHPETGSS), and 347-376 (GVNELEHNSSNLNNSNSGTPHNHNQNQHTN). Positions 354 to 376 (NSSNLNNSNSGTPHNHNQNQHTN) are enriched in low complexity.

The protein localises to the cytoplasm. It is found in the nucleus. It localises to the mitochondrion. In terms of biological role, mitochondrial and nuclear transcriptional activator required for respiratory growth. The protein is Respiration factor 1 (RSF1) of Saccharomyces cerevisiae (strain YJM789) (Baker's yeast).